Consider the following 311-residue polypeptide: tRNA-cytidine(32) 2-sulfurtransferase (311 aa).

Residues 47–52 (SGGKDS) carry the PP-loop motif motif. [4Fe-4S] cluster-binding residues include Cys-122, Cys-125, and Cys-213.

This sequence belongs to the TtcA family. As to quaternary structure, homodimer. Mg(2+) serves as cofactor. It depends on [4Fe-4S] cluster as a cofactor.

The protein localises to the cytoplasm. It catalyses the reaction cytidine(32) in tRNA + S-sulfanyl-L-cysteinyl-[cysteine desulfurase] + AH2 + ATP = 2-thiocytidine(32) in tRNA + L-cysteinyl-[cysteine desulfurase] + A + AMP + diphosphate + H(+). It functions in the pathway tRNA modification. Catalyzes the ATP-dependent 2-thiolation of cytidine in position 32 of tRNA, to form 2-thiocytidine (s(2)C32). The sulfur atoms are provided by the cysteine/cysteine desulfurase (IscS) system. This Klebsiella pneumoniae (strain 342) protein is tRNA-cytidine(32) 2-sulfurtransferase.